Consider the following 196-residue polypeptide: ATP-dependent Clp protease proteolytic subunit (196 aa).

The Nucleophile role is filled by Ser101. His126 is a catalytic residue.

The protein belongs to the peptidase S14 family. Component of the chloroplastic Clp protease core complex.

Its subcellular location is the plastid. The protein localises to the chloroplast stroma. The enzyme catalyses Hydrolysis of proteins to small peptides in the presence of ATP and magnesium. alpha-casein is the usual test substrate. In the absence of ATP, only oligopeptides shorter than five residues are hydrolyzed (such as succinyl-Leu-Tyr-|-NHMec, and Leu-Tyr-Leu-|-Tyr-Trp, in which cleavage of the -Tyr-|-Leu- and -Tyr-|-Trp bonds also occurs).. Its function is as follows. Cleaves peptides in various proteins in a process that requires ATP hydrolysis. Has a chymotrypsin-like activity. Plays a major role in the degradation of misfolded proteins. The polypeptide is ATP-dependent Clp protease proteolytic subunit (Citrus sinensis (Sweet orange)).